A 161-amino-acid polypeptide reads, in one-letter code: Allophycocyanin subunit alpha 1 (161 aa).

An N4-methylasparagine modification is found at Asn-71. A (2R,3E)-phycocyanobilin-binding site is contributed by Cys-81.

It belongs to the phycobiliprotein family. Heterohexamer of two alpha chains, one alpha-B chain and three beta chains. Contains one covalently linked phycocyanobilin chromophore. The chromophore is added by phycocyanobilin lyase CpcS 1.

It is found in the cellular thylakoid membrane. Functionally, light-harvesting photosynthetic bile pigment-protein from the phycobiliprotein complex. Allophycocyanin has a maximum absorption at approximately 650 to 653 nanometers. The polypeptide is Allophycocyanin subunit alpha 1 (apcA1) (Nostoc sp. (strain PCC 7120 / SAG 25.82 / UTEX 2576)).